The primary structure comprises 96 residues: Iron-sulfur cluster assembly protein CyaY (96 aa).

Belongs to the frataxin family.

In terms of biological role, involved in iron-sulfur (Fe-S) cluster assembly. May act as a regulator of Fe-S biogenesis. This Rickettsia bellii (strain RML369-C) protein is Iron-sulfur cluster assembly protein CyaY.